The primary structure comprises 116 residues: MAKRGGFPGGMPGNMNNLMKQAQRMQRQMEEQQAELENKEFSATAGGGVVEVTVTGKREVSKVKIDPEAVDPDDVEMLEDLIVAATNEALRKCEEESQAQMAKITGGLGGLGGGLF.

Over residues 1–12 (MAKRGGFPGGMP) the composition is skewed to gly residues. The disordered stretch occupies residues 1–42 (MAKRGGFPGGMPGNMNNLMKQAQRMQRQMEEQQAELENKEFS). A compositionally biased stretch (low complexity) spans 13 to 26 (GNMNNLMKQAQRMQ).

It belongs to the YbaB/EbfC family. As to quaternary structure, homodimer.

Its subcellular location is the cytoplasm. It is found in the nucleoid. Functionally, binds to DNA and alters its conformation. May be involved in regulation of gene expression, nucleoid organization and DNA protection. This is Nucleoid-associated protein EUBELI_02017 from Lachnospira eligens (strain ATCC 27750 / DSM 3376 / VPI C15-48 / C15-B4) (Eubacterium eligens).